Reading from the N-terminus, the 191-residue chain is CASP-like protein 4C2 (191 aa).

The Cytoplasmic portion of the chain corresponds to 1–29 (MEAADSATNNSKDTHFYGKSRAENRRRSD). Residues 30 to 50 (AMLLLFRALTFSFSLAAVVVM) form a helical membrane-spanning segment. Over 51-72 (GTNRYRINPQLKVSWYDFEPYR) the chain is Extracellular. The helical transmembrane segment at 73–93 (YVLAVNAIICIYSFVETWLAV) threads the bilayer. Over 94-116 (YTYLQGSYLLPEIFQVWFDYGHD) the chain is Cytoplasmic. A helical transmembrane segment spans residues 117–137 (QGFAYLLFSANSAGVAMAQLL). The Extracellular portion of the chain corresponds to 138-161 (QSGNTLIHGAYHCTEAGGYCTQAR). Residues 162-182 (VSIALGFVAFLFLALSSLLTG) traverse the membrane as a helical segment. At 183-191 (LRVARWYLR) the chain is on the cytoplasmic side.

This sequence belongs to the Casparian strip membrane proteins (CASP) family. Homodimer and heterodimers.

It is found in the cell membrane. In Physcomitrium patens (Spreading-leaved earth moss), this protein is CASP-like protein 4C2.